A 598-amino-acid polypeptide reads, in one-letter code: Nuclear receptor subfamily 4 group A member 1 (598 aa).

2 disordered regions span residues 1 to 43 (MPCI…PEAA) and 128 to 151 (GSDY…PPQL). A compositionally biased stretch (low complexity) spans 134–145 (SPCSAPSPSTPS). The segment at 171-466 (RAWTEQLPKA…PAEGKLIFCS (296 aa)) is required for nuclear import. Residues 264 to 339 (EGRCAVCGDN…VGMVKEVVRT (76 aa)) constitute a DNA-binding region (nuclear receptor). 2 consecutive NR C4-type zinc fingers follow at residues 267 to 287 (CAVC…CEGC) and 303 to 327 (CLAN…FQKC). A required for binding NBRE-containing DNA region spans residues 268–354 (AVCGDNASCQ…RRGRLPSKPK (87 aa)). Residues 299-361 (AKYICLANKD…KPKQPPETSP (63 aa)) form a required for the interaction with RXRA region. Ser-341 bears the Phosphoserine; by PKA mark. Positions 341–361 (SLKGRRGRLPSKPKQPPETSP) are disordered. Ser-351 bears the Phosphoserine; by PKA, RPS6KA1 and RPS6KA3 mark. Residues 360–595 (SPAHLLTSLV…PIVDKIFMDT (236 aa)) form the NR LBD domain. The segment at 521–544 (PRRVEELQNRIASCLKEHVSAEAG) is binds lipopolysaccharide. An AF-2 region spans residues 584–595 (PPPIVDKIFMDT).

This sequence belongs to the nuclear hormone receptor family. NR4 subfamily. Binds the NGFI-B response element (NBRE) as a monomer. Binds the Nur response element (NurRE), consisting of two inverse NBRE-related octanucleotide repeats separated by 6 base-pairs, as a dimer. Interacts (via N-terminus) with NLRP3 (via LRR repeat domain); the interaction is direct, requires binding of NR4A1/Nur77 to NBRE-containing dsDNA and lipopolysaccharide, and leads to non-canonical NLRP3 inflammasome activation. Interacts with GADD45GIP1. Interacts with STK11. Interacts with IFI27. Heterodimer (via DNA-binding domain) with RXRA (via C-terminus); DNA-binding of the heterodimer is enhanced by 9-cis retinoic acid. Competes for the RXRA interaction with EP300 and thereby attenuates EP300 mediated acetylation of RXRA. Interacts with NCOA1. Interacts with NCOA2. Interacts with NCOA3. It depends on Zn(2+) as a cofactor. In terms of processing, phosphorylated at Ser-351 by RPS6KA1 and RPS6KA3 in response to mitogenic or stress stimuli. Post-translationally, acetylated by p300/CBP, acetylation increases stability. Deacetylated by HDAC1.

It localises to the nucleus. The protein resides in the cytoplasm. The protein localises to the cytosol. It is found in the mitochondrion. Its function is as follows. Orphan nuclear receptor. Binds the NGFI-B response element (NBRE) 5'-AAAGGTCA-3'. Binds 9-cis-retinoic acid outside of its ligand-binding (NR LBD) domain. Participates in energy homeostasis by sequestrating the kinase STK11 in the nucleus, thereby attenuating cytoplasmic AMPK activation. Regulates the inflammatory response in macrophages by regulating metabolic adaptations during inflammation, including repressing the transcription of genes involved in the citric acid cycle (TCA). Inhibits NF-kappa-B signaling by binding to low-affinity NF-kappa-B binding sites, such as at the IL2 promoter. May act concomitantly with NR4A2 in regulating the expression of delayed-early genes during liver regeneration. Plays a role in the vascular response to injury. Functionally, in the cytosol, upon its detection of both bacterial lipopolysaccharide (LPS) and NBRE-containing mitochondrial DNA released by GSDMD pores during pyroptosis, it promotes non-canonical NLRP3 inflammasome activation by stimulating association of NLRP3 and NEK7. The sequence is that of Nuclear receptor subfamily 4 group A member 1 (NR4A1) from Bos taurus (Bovine).